The following is a 160-amino-acid chain: uncharacterized protein (160 aa).

The protein belongs to the Dps family.

This is an uncharacterized protein from Haemophilus influenzae (strain ATCC 51907 / DSM 11121 / KW20 / Rd).